Reading from the N-terminus, the 241-residue chain is Tumor necrosis factor receptor superfamily member grnd (241 aa).

The signal sequence occupies residues M1 to A27. The Extracellular portion of the chain corresponds to A28–Q98. 4 disulfides stabilise this stretch: C35–C47, C40–C54, C57–C77, and C61–C73. An N-linked (GlcNAc...) asparagine glycan is attached at N63. Residues L99–F119 traverse the membrane as a helical segment. The Cytoplasmic portion of the chain corresponds to L120–F241.

Interacts (via extracellular cysteine-rich domain) with egr (via secreted TNF-homology soluble form); forms heterohexamers when 3 copies associate with egr trimers. Interacts with Traf6/TRAF2 and veli (via PDZ domain). Post-translationally, N-glycosylated on Asn-63. Glycosylation regulates ligand binding, specifically reducing affinity for the TNF egr, thereby inhibiting activation of JNK signaling. As to expression, expressed in the adult midgut; under normal conditions expressed at lower levels than the other TNF receptor wgn.

The protein resides in the apical cell membrane. Its subcellular location is the cytoplasmic vesicle membrane. Acts as a receptor for TNF-cytokine egr. Plays a role in activation of JNK signaling and is required for egr-induced apoptosis, including in wing imaginal discs during development. May also play an egr-independent role in cell proliferation. TNF receptor involved in triggering JNK-dependent proliferation of the enteroblast-enterocyte lineage in response to stress-induced release of egr by intestinal stem cells and enteroblasts. Involved in regulation of insulin production in response to dietary protein shortage keeping systemic growth in check. Activation in brain insulin producing cells through binding of egr released into the hemolymph in response to dietary amino acid shortage, results in JNK-dependent inhibition of insulin production. In Drosophila melanogaster (Fruit fly), this protein is Tumor necrosis factor receptor superfamily member grnd.